The primary structure comprises 517 residues: MDIVGGQNLRQMWDDLAGVYGDKTALIFESCEGIVRQFSYASLNEEINRTANLFYSLGIRKGDRVALHLDNCPEFIFCWFGLAKIGAIMVPINARLLGEESAWILQNSQVSLLVTSAQFYPMYREIRQDNSTPLNHICLIGEQLPADDGVSHFTQLQSRQSTTLCYTPALSTDDTAEILFTSGTTSRPKGVVITHYNLRFAGYYSAWQIALRDDDVYMTVMPAFHIDCQCTAAMPAFSAGSTFVLLEKYSARAFWDQVRKYQATVTECIPMMIRTLMVQPAAPTDRQHHLREVMFYLNLSEQEKDDFTERFGVRLLTSYGMTETIVGIIGDRPGDKRRWPSIGRVGFSYEAEIRDDQNRPLPAGEIGEICIKGIPGKTIFKEYYMQPEATARALEPEGWLHTGDSGYQDEDGYFYFVDRRCNMIKRGGENVSCVELENIISAHPKIQDIVVVGIKDAIRDEAIKAFIVLNEGETLSEAEFFSFCENNMAKFKVPSFMEIRTDLPRNCSGKIIKKNLK.

This sequence belongs to the ATP-dependent AMP-binding enzyme family.

The enzyme catalyses 4-(trimethylamino)butanoate + ATP + CoA = 4-(trimethylamino)butanoyl-CoA + AMP + diphosphate. It carries out the reaction crotonobetaine + ATP + CoA = crotonobetainyl-CoA + AMP + diphosphate. It catalyses the reaction (R)-carnitine + ATP + CoA = (R)-carnitinyl-CoA + AMP + diphosphate. It participates in amine and polyamine metabolism; carnitine metabolism. In terms of biological role, catalyzes the transfer of CoA to carnitine, generating the initial carnitinyl-CoA needed for the CaiB reaction cycle. Also has activity toward crotonobetaine and gamma-butyrobetaine. In Salmonella agona (strain SL483), this protein is Crotonobetaine/carnitine--CoA ligase.